The sequence spans 488 residues: Acetyl-coenzyme A carboxylase carboxyl transferase subunit beta, chloroplastic (488 aa).

The 265-residue stretch at 224–488 folds into the CoA carboxyltransferase N-terminal domain; the sequence is LWIQCDNCYG…FFPLNKNEIK (265 aa). Zn(2+)-binding residues include cysteine 228, cysteine 231, cysteine 244, and cysteine 247. The C4-type zinc finger occupies 228–247; it reads CDNCYGLMYKKVEMNVCEEC.

This sequence belongs to the AccD/PCCB family. As to quaternary structure, acetyl-CoA carboxylase is a heterohexamer composed of biotin carboxyl carrier protein, biotin carboxylase and 2 subunits each of ACCase subunit alpha and ACCase plastid-coded subunit beta (accD). The cofactor is Zn(2+).

It localises to the plastid. The protein localises to the chloroplast stroma. The catalysed reaction is N(6)-carboxybiotinyl-L-lysyl-[protein] + acetyl-CoA = N(6)-biotinyl-L-lysyl-[protein] + malonyl-CoA. The protein operates within lipid metabolism; malonyl-CoA biosynthesis; malonyl-CoA from acetyl-CoA: step 1/1. Functionally, component of the acetyl coenzyme A carboxylase (ACC) complex. Biotin carboxylase (BC) catalyzes the carboxylation of biotin on its carrier protein (BCCP) and then the CO(2) group is transferred by the transcarboxylase to acetyl-CoA to form malonyl-CoA. This chain is Acetyl-coenzyme A carboxylase carboxyl transferase subunit beta, chloroplastic, found in Arabis hirsuta (Hairy rock-cress).